We begin with the raw amino-acid sequence, 154 residues long: Prefoldin subunit alpha (154 aa).

Residues 119–154 (EKAEVETEMEELEQQAQQMQQQQMQQMMQQQEQEDE) form a disordered region. Residues 132 to 154 (QQAQQMQQQQMQQMMQQQEQEDE) are compositionally biased toward low complexity.

The protein belongs to the prefoldin subunit alpha family. In terms of assembly, heterohexamer of two alpha and four beta subunits.

It is found in the cytoplasm. Molecular chaperone capable of stabilizing a range of proteins. Seems to fulfill an ATP-independent, HSP70-like function in archaeal de novo protein folding. The chain is Prefoldin subunit alpha from Haloarcula marismortui (strain ATCC 43049 / DSM 3752 / JCM 8966 / VKM B-1809) (Halobacterium marismortui).